Here is a 482-residue protein sequence, read N- to C-terminus: Bifunctional protein GlmU (482 aa).

Residues 1-241 (MTASTEAAVV…SALVTGVNDR (241 aa)) form a pyrophosphorylase region. Residues 12–15 (LAAG), Lys26, Gln83, 88–89 (GT), 112–114 (SGD), Gly151, Glu166, Asn181, and Asn239 contribute to the UDP-N-acetyl-alpha-D-glucosamine site. Position 114 (Asp114) interacts with Mg(2+). Asn239 is a Mg(2+) binding site. The tract at residues 242–262 (VQLSDLGKVLNRRIVAAHQRA) is linker. The tract at residues 263-482 (GVTIIDPGST…AARKALGDES (220 aa)) is N-acetyltransferase. UDP-N-acetyl-alpha-D-glucosamine-binding residues include Arg344 and Lys362. Residue His374 is the Proton acceptor of the active site. Residues Tyr377 and Asn388 each coordinate UDP-N-acetyl-alpha-D-glucosamine. Residues Ala391, 397-398 (NY), Ser416, and Ala434 contribute to the acetyl-CoA site. A disordered region spans residues 463–482 (KKRPGSAADKAARKALGDES). Basic and acidic residues predominate over residues 472–482 (KAARKALGDES).

It in the N-terminal section; belongs to the N-acetylglucosamine-1-phosphate uridyltransferase family. This sequence in the C-terminal section; belongs to the transferase hexapeptide repeat family. As to quaternary structure, homotrimer. The cofactor is Mg(2+).

The protein resides in the cytoplasm. It catalyses the reaction alpha-D-glucosamine 1-phosphate + acetyl-CoA = N-acetyl-alpha-D-glucosamine 1-phosphate + CoA + H(+). The enzyme catalyses N-acetyl-alpha-D-glucosamine 1-phosphate + UTP + H(+) = UDP-N-acetyl-alpha-D-glucosamine + diphosphate. It participates in nucleotide-sugar biosynthesis; UDP-N-acetyl-alpha-D-glucosamine biosynthesis; N-acetyl-alpha-D-glucosamine 1-phosphate from alpha-D-glucosamine 6-phosphate (route II): step 2/2. It functions in the pathway nucleotide-sugar biosynthesis; UDP-N-acetyl-alpha-D-glucosamine biosynthesis; UDP-N-acetyl-alpha-D-glucosamine from N-acetyl-alpha-D-glucosamine 1-phosphate: step 1/1. Its pathway is bacterial outer membrane biogenesis; LPS lipid A biosynthesis. Functionally, catalyzes the last two sequential reactions in the de novo biosynthetic pathway for UDP-N-acetylglucosamine (UDP-GlcNAc). The C-terminal domain catalyzes the transfer of acetyl group from acetyl coenzyme A to glucosamine-1-phosphate (GlcN-1-P) to produce N-acetylglucosamine-1-phosphate (GlcNAc-1-P), which is converted into UDP-GlcNAc by the transfer of uridine 5-monophosphate (from uridine 5-triphosphate), a reaction catalyzed by the N-terminal domain. In Mycolicibacterium smegmatis (strain ATCC 700084 / mc(2)155) (Mycobacterium smegmatis), this protein is Bifunctional protein GlmU.